Reading from the N-terminus, the 326-residue chain is Light-induced protein, chloroplastic (326 aa).

Residues Met1–Gln63 constitute a chloroplast transit peptide.

It belongs to the LIPC family. Associates with the major light-harvesting antenna complex polypeptides of the PSII oxygen-evolving complex. Expressed in leaves.

Its subcellular location is the plastid. It localises to the chloroplast thylakoid membrane. In terms of biological role, required for normal plant growth. May be both photoprotective and play an ancillary role in photosynthesis. May structurally stabilize thylakoids during osmotic and oxidative stress. In Solanum tuberosum (Potato), this protein is Light-induced protein, chloroplastic.